We begin with the raw amino-acid sequence, 119 residues long: Transcription and mRNA export factor SUS1 (119 aa).

It belongs to the ENY2 family. Component of the nuclear pore complex (NPC)-associated TREX-2 complex (transcription and export complex 2), composed of at least SUS1, SAC3, THP1, SEM1, and CDC31. TREX-2 contains 2 SUS1 chains. The TREX-2 complex interacts with the nucleoporin NUP1. Component of the 1.8 MDa SAGA transcription coactivator-HAT complex. SAGA is built of 5 distinct domains with specialized functions. Within the SAGA complex, SUS1, SGF11, SGF73 and UBP8 form an additional subcomplex of SAGA called the DUB module (deubiquitination module). Interacts directly with THP1, SAC3, SGF11, and with the RNA polymerase II.

The protein resides in the nucleus. It localises to the nucleoplasm. The protein localises to the cytoplasm. It is found in the P-body. Functionally, involved in mRNA export coupled transcription activation by association with both the TREX-2 and the SAGA complexes. At the promoters, SAGA is required for recruitment of the basal transcription machinery. It influences RNA polymerase II transcriptional activity through different activities such as TBP interaction and promoter selectivity, interaction with transcription activators, and chromatin modification through histone acetylation and deubiquitination. Within the SAGA complex, participates in a subcomplex required for deubiquitination of H2B and for the maintenance of steady-state H3 methylation levels. The TREX-2 complex functions in docking export-competent ribonucleoprotein particles (mRNPs) to the nuclear entrance of the nuclear pore complex (nuclear basket). TREX-2 participates in mRNA export and accurate chromatin positioning in the nucleus by tethering genes to the nuclear periphery. May also be involved in cytoplasmic mRNA decay by interaction with components of P-bodies. This chain is Transcription and mRNA export factor SUS1, found in Candida albicans (strain SC5314 / ATCC MYA-2876) (Yeast).